The following is a 467-amino-acid chain: Neutrophil collagenase (467 aa).

The signal sequence occupies residues 1-20 (MFSLKTLPFLLLLHVQISKA). A propeptide spans 21 to 100 (FPVSSKEKNT…CGVPDSGGFM (80 aa)) (activation peptide). N54 and N73 each carry an N-linked (GlcNAc...) asparagine glycan. The Cysteine switch motif lies at 89-96 (PRCGVPDS). C91 is a Zn(2+) binding site. N-linked (GlcNAc...) asparagine glycosylation occurs at N112. Residue D157 participates in Ca(2+) binding. Zn(2+)-binding residues include H167 and D169. Residues D174, G175, N177, and I179 each contribute to the Ca(2+) site. Residue H182 participates in Zn(2+) binding. Positions 189, 191, and 193 each coordinate Ca(2+). A Zn(2+)-binding site is contributed by H195. Positions 197 and 200 each coordinate Ca(2+). A glycan (N-linked (GlcNAc...) asparagine) is linked at N204. H217 contacts Zn(2+). Residue E218 is part of the active site. Residues H221 and H227 each coordinate Zn(2+). N-linked (GlcNAc...) asparagine glycosylation is present at N246. Hemopexin repeat units follow at residues 276-325 (PKPC…WPSL), 326-372 (PTGI…GFPS), 374-420 (VQAI…FPGI), and 421-464 (ESKV…WLNC). An intrachain disulfide couples C279 to C464. A Ca(2+)-binding site is contributed by D286. Positions 378 and 425 each coordinate Ca(2+).

This sequence belongs to the peptidase M10A family. Requires Ca(2+) as cofactor. Zn(2+) is required as a cofactor. As to expression, neutrophils.

The protein localises to the cytoplasmic granule. The protein resides in the secreted. It is found in the extracellular space. It localises to the extracellular matrix. The enzyme catalyses Cleavage of interstitial collagens in the triple helical domain. Unlike EC 3.4.24.7, this enzyme cleaves type III collagen more slowly than type I.. Its activity is regulated as follows. Cannot be activated without removal of the activation peptide. Can degrade fibrillar type I, II, and III collagens. The protein is Neutrophil collagenase (MMP8) of Homo sapiens (Human).